Reading from the N-terminus, the 154-residue chain is Ribonuclease H (154 aa).

The RNase H type-1 domain occupies 5–147 (GKSRVAIYTD…ADMLARGEVE (143 aa)). The Mg(2+) site is built by Asp-14, Glu-53, Asp-75, and Asp-139.

This sequence belongs to the RNase H family. As to quaternary structure, monomer. It depends on Mg(2+) as a cofactor.

It is found in the cytoplasm. It carries out the reaction Endonucleolytic cleavage to 5'-phosphomonoester.. Functionally, endonuclease that specifically degrades the RNA of RNA-DNA hybrids. This Anaplasma marginale (strain St. Maries) protein is Ribonuclease H.